The primary structure comprises 315 residues: GTP cyclohydrolase MptA (315 aa).

It belongs to the GTP cyclohydrolase IV family. Homodimer. Requires Fe(2+) as cofactor.

The enzyme catalyses GTP + H2O = 7,8-dihydroneopterin 2',3'-cyclic phosphate + formate + diphosphate + H(+). Its pathway is cofactor biosynthesis; 5,6,7,8-tetrahydromethanopterin biosynthesis. In terms of biological role, converts GTP to 7,8-dihydro-D-neopterin 2',3'-cyclic phosphate, the first intermediate in the biosynthesis of coenzyme methanopterin. In Methanococcus maripaludis (strain C6 / ATCC BAA-1332), this protein is GTP cyclohydrolase MptA.